A 186-amino-acid chain; its full sequence is Protein C (186 aa).

Residues 1–12 show a composition bias toward polar residues; that stretch reads MSKTDWNASGPS. A disordered region spans residues 1–43; the sequence is MSKTDWNASGPSRPSPSAHWPSGKLWQHGQKYQTTQDRSRPPA.

It belongs to the morbillivirus protein C family. In terms of assembly, interacts with the phosphoprotein (via C-terminus); this interaction allows C to associate with the ribonucleocapsid.

The protein resides in the host nucleus. Its subcellular location is the host cytoplasmic vesicle. Functionally, ribonucleocapsid-associated protein that interacts with the phosphoprotein (P), thereby increasing replication accuracy and processivity of the polymerase complex. The sequence is that of Protein C (P/V/C) from Homo sapiens (Human).